Here is a 622-residue protein sequence, read N- to C-terminus: Apical membrane antigen 1 (622 aa).

An N-terminal signal peptide occupies residues 1–24 (MRKLYCVLLLSAFEFTYMINFGRG). The Extracellular portion of the chain corresponds to 25–546 (QNYWEHPYQN…EHKPTYDNMK (522 aa)). Cystine bridges form between C149/C302, C217/C247, C263/C275, C320/C418, and C337/C409. An N-linked (GlcNAc...) asparagine glycan is attached at N162. N286, N371, N421, N422, and N499 each carry an N-linked (GlcNAc...) asparagine glycan. 3 disulfides stabilise this stretch: C443-C502, C490-C507, and C492-C509. Residues 547–567 (IIIASSAAVAVLATILMVYLY) form a helical membrane-spanning segment. At 568 to 622 (KRKGNAEKYDKMDQPQDYGKSTSRNDEMLDPEASFWGEEKRASHTTPVLMEKPYY) the chain is on the cytoplasmic side. The tract at residues 577–607 (DKMDQPQDYGKSTSRNDEMLDPEASFWGEEK) is disordered.

This sequence belongs to the apicomplexan parasites AMA1 family.

The protein localises to the membrane. In terms of biological role, involved in parasite invasion of erythrocytes. This chain is Apical membrane antigen 1 (AMA-1), found in Plasmodium falciparum (isolate Camp / Malaysia).